A 238-amino-acid polypeptide reads, in one-letter code: Ribonuclease PH (238 aa).

Phosphate is bound by residues arginine 86 and 124–126 (GTR).

It belongs to the RNase PH family. As to quaternary structure, homohexameric ring arranged as a trimer of dimers.

The enzyme catalyses tRNA(n+1) + phosphate = tRNA(n) + a ribonucleoside 5'-diphosphate. Phosphorolytic 3'-5' exoribonuclease that plays an important role in tRNA 3'-end maturation. Removes nucleotide residues following the 3'-CCA terminus of tRNAs; can also add nucleotides to the ends of RNA molecules by using nucleoside diphosphates as substrates, but this may not be physiologically important. Probably plays a role in initiation of 16S rRNA degradation (leading to ribosome degradation) during starvation. The polypeptide is Ribonuclease PH (Photobacterium profundum (strain SS9)).